A 627-amino-acid chain; its full sequence is Plasmepsin IX (627 aa).

Residues 1 to 13 (MFFINFKKIKKKQ) lie on the Cytoplasmic side of the membrane. A helical; Signal-anchor for type II membrane protein membrane pass occupies residues 14–34 (FPIYLTQHRIITVFLIFIYFI). The Lumenal portion of the chain corresponds to 35 to 627 (NLKDCFHINN…SSLHNKINNL (593 aa)). In terms of domain architecture, Peptidase A1 spans 228–605 (YVGYIQIGTP…NNNSSYVGIA (378 aa)). Catalysis depends on residues Asp246 and Asp495.

Belongs to the peptidase A1 family. In terms of processing, autocleaved into a p55 mature form.

It localises to the membrane. The protein resides in the cytoplasmic vesicle. The protein localises to the secretory vesicle. Its subcellular location is the rhoptry. Its activity is regulated as follows. Inhibited by small molecule 49c. Inhibited by small molecule WM382. Its function is as follows. During the asexual blood stage, initiates the proteolytic maturation of several rhoptry proteins and thus, is required for merozoite invasion of host erythrocytes and probably the subsequent development of the ring-stage. Cleaves rhoptry associated protein 1 RAP1 and apical sushi protein ASP during schizont maturation. Also cleaves rhoptry protein RON3. The protein is Plasmepsin IX of Plasmodium falciparum (isolate 3D7).